The chain runs to 630 residues: MAAVAMTPNPVQTLQEEAVCAICLDYFTDPVSIGCGHNFCRVCVTQLWGGEDEEDRDELDREEEEEEVGEEEEVEAVGAGGGWDTPMREEDYEGDMEEEAEEEEEVFWSSGIGGSNWDNMDYVWEEEEEEEEEELDYYLGDVADLRGEDEDEEEEVLEEDEEEELDPITQLPPPPAPRRCFTCPQCRKSFPRRSFRPNLQLANMVQVIRQMHPTPGRGSRVNEQGICPRHQEALKLFCEVDEEAICVVCRESRSHKQHSVVPLEEVVQEYKAKLQGHVEPLRKHLEAVQKMKAKEERRVTELKSQMKSELAAVASEFGRLTRFLAEEQAGLERRLREMHEAQLGRAGAAANRLEEQAAQLSRLLAEAQERSQQGGLRLLQDIKETFNRCEEIQLQPPEIWSPDPCQPHSHDFLTDAIVRKMSRMFCQAARVDLTLDPDTAHPALLLSPDRRGVRLAERRQEVPEHSKRFSADCCVLGAQGFRSGRHYWEVEVGGRRGWAVGAARESTHHKEKVGSGGSSVSSGDASSSRHHHRRRRLHLPQQLLLQREVWCVGTHGKRYQAQSSTEQTLLSPCEKPRRFGVYLDYEAGRLGFYNADTLAHVHTFSAAFLGERVFPFFRVLSKGTRIKLCP.

The RING-type; degenerate zinc-finger motif lies at 20–61; the sequence is CAICLDYFTDPVSIGCGHNFCRVCVTQLWGGEDEEDRDELDR. Residues 51-75 are compositionally biased toward acidic residues; the sequence is EDEEDRDELDREEEEEEVGEEEEVE. 2 disordered regions span residues 51–97 and 148–176; these read EDEE…GDME and EDED…PPPA. T85 carries the post-translational modification Phosphothreonine. A compositionally biased stretch (acidic residues) spans 148–166; that stretch reads EDEDEEEEVLEEDEEEELD. The B box-type zinc-finger motif lies at 222–263; that stretch reads NEQGICPRHQEALKLFCEVDEEAICVVCRESRSHKQHSVVPL. C227, H230, C249, and H255 together coordinate Zn(2+). K256 participates in a covalent cross-link: Glycyl lysine isopeptide (Lys-Gly) (interchain with G-Cter in SUMO2). Positions 281–374 form a coiled coil; it reads LRKHLEAVQK…AEAQERSQQG (94 aa). One can recognise a B30.2/SPRY domain in the interval 413 to 630; the sequence is LTDAIVRKMS…SKGTRIKLCP (218 aa). S447 is subject to Phosphoserine. The disordered stretch occupies residues 503-535; that stretch reads ARESTHHKEKVGSGGSSVSSGDASSSRHHHRRR.

This sequence belongs to the TRIM/RBCC family. Interacts with PRKCA. Interacts with NOD2. Interacts with TRIM17; this interaction prevents TRIM41 activity on ZSCAN2. Post-translationally, auto-ubiquitinated.

The protein resides in the cytoplasm. It localises to the nucleus. It carries out the reaction S-ubiquitinyl-[E2 ubiquitin-conjugating enzyme]-L-cysteine + [acceptor protein]-L-lysine = [E2 ubiquitin-conjugating enzyme]-L-cysteine + N(6)-ubiquitinyl-[acceptor protein]-L-lysine.. The protein operates within protein modification; protein ubiquitination. E3 ligase that plays essential roles in innate antiviral response. Directly binds to influenza A virus or vesicular stomatitis virus nucleoproteins and targets them for ubiquitination and proteasomal degradation, thereby limiting viral infections. Activates the innate antiviral response by catalyzing monoubiquitination of CGAS, thereby activating CGAS. Also involved in innate antiviral response by mediating 'Lys-63'-linked polyubiquitylation of BCL10 which in turn hubs NEMO for activation of NF-kappa-B and IRF3 pathways. Catalyzes the ubiquitin-mediated degradation of other substrates including protein kinase C, ZSCAN21 or TOP3B suggesting additional roles besides its function in immune response. In Mus musculus (Mouse), this protein is E3 ubiquitin-protein ligase TRIM41.